The following is a 208-amino-acid chain: MKTLLRIDSSARIEGSRSRRLGDALEARWRAGSPDGAVVRRDLAADPVPHIEATTIAGFFTPADQVTDAMRAATVLSDRLIGEVEAADALLITAPMYNFGLPSTLKAWIDHVVRIHRTVAYDGTTFRGLVTGKAAYVALAYGAGSYEPGGTLAPFDYAKPYLTHVLGFIGFRDIEVVGVEGTSGEEGAAAAALDAALKAIENLPSLAA.

FMN is bound by residues Ser-10, Ser-16–Ser-18, and Met-96–Phe-99.

It belongs to the azoreductase type 1 family. In terms of assembly, homodimer. Requires FMN as cofactor.

It carries out the reaction 2 a quinone + NADH + H(+) = 2 a 1,4-benzosemiquinone + NAD(+). The catalysed reaction is N,N-dimethyl-1,4-phenylenediamine + anthranilate + 2 NAD(+) = 2-(4-dimethylaminophenyl)diazenylbenzoate + 2 NADH + 2 H(+). Quinone reductase that provides resistance to thiol-specific stress caused by electrophilic quinones. Functionally, also exhibits azoreductase activity. Catalyzes the reductive cleavage of the azo bond in aromatic azo compounds to the corresponding amines. The polypeptide is FMN-dependent NADH:quinone oxidoreductase (Xanthobacter autotrophicus (strain ATCC BAA-1158 / Py2)).